The chain runs to 189 residues: GTP cyclohydrolase 1 (189 aa).

Zn(2+) contacts are provided by cysteine 78, histidine 81, and cysteine 150.

It belongs to the GTP cyclohydrolase I family. As to quaternary structure, homomer.

The catalysed reaction is GTP + H2O = 7,8-dihydroneopterin 3'-triphosphate + formate + H(+). It functions in the pathway cofactor biosynthesis; 7,8-dihydroneopterin triphosphate biosynthesis; 7,8-dihydroneopterin triphosphate from GTP: step 1/1. In Listeria monocytogenes serotype 4a (strain HCC23), this protein is GTP cyclohydrolase 1.